The sequence spans 671 residues: MADPASYRPQTGEIPTTPGVYRFRDPHGRVIYVGKAKNLRSRLNSYFANPAGLLPKTHAMVHAASSVEWTVVGSELESLQLEYTWIKEFKPRFNVVFRDDKTYPYLAVTMGEKYPRVQVMRGERRKGTRYFGPYTAGAIRETMDTLLRVFPVRSCSAGVFKRAESSGRPCLLGYIDKCSAPCVGRVTPDEHRGLAEDFCSFMGGEAKRFISRLEKDMAAAVAELDYERAAGLRDDIIALRKVFERNAVVLAEDTDADVFALHEDELEASVQVFHVRGGRVRGQRGWVVEKVEDATTPELIEHLLQQVYGEDSEVQGRIPREVLVPENPSNHAELMEWLGGLRGARVDIRVPQRGDKAALMSTVRENAEQALKLHKTRRAGDITVRSLALQELQEALEIPVPLLRIECFDISHVQGTNVVASMVVVEDGLPKKSDYRKFSITGAAATDDTAAMHDVLTRRFRHYLTDKAAQVPIVSGEIVNPTRAGAKSGTELPPSDLDVPAPKAKFAYPPNLVVVDGGQPQVNAAARALAELGIDDVYVVGLAKRLEEVWLPDSDFPVILPRTSQGLYLLQRIRDEAHRFAITFHRQKRGKAMTVSVLDGVPGLGEAKRKALVAHFGSLKKIKAASVEELTSAKGIGPALAAAVVQHLGSTEDAGERAPAVNMTTGEILES.

One can recognise a GIY-YIG domain in the interval 16–95; the sequence is TTPGVYRFRD…IKEFKPRFNV (80 aa). Residues 207–242 enclose the UVR domain; sequence KRFISRLEKDMAAAVAELDYERAAGLRDDIIALRKV.

It belongs to the UvrC family. As to quaternary structure, interacts with UvrB in an incision complex.

It localises to the cytoplasm. Its function is as follows. The UvrABC repair system catalyzes the recognition and processing of DNA lesions. UvrC both incises the 5' and 3' sides of the lesion. The N-terminal half is responsible for the 3' incision and the C-terminal half is responsible for the 5' incision. The polypeptide is UvrABC system protein C (Paenarthrobacter aurescens (strain TC1)).